A 382-amino-acid chain; its full sequence is Mannitol-1-phosphate 5-dehydrogenase (382 aa).

3 to 14 (ALHFGAGNIGRG) is an NAD(+) binding site. K269 carries the N6-acetyllysine modification.

The protein belongs to the mannitol dehydrogenase family.

It catalyses the reaction D-mannitol 1-phosphate + NAD(+) = beta-D-fructose 6-phosphate + NADH + H(+). In Escherichia coli O127:H6 (strain E2348/69 / EPEC), this protein is Mannitol-1-phosphate 5-dehydrogenase.